A 140-amino-acid polypeptide reads, in one-letter code: Small ribosomal subunit protein uS19 (140 aa).

It belongs to the universal ribosomal protein uS19 family.

Its function is as follows. Protein S19 forms a complex with S13 that binds strongly to the 16S ribosomal RNA. This chain is Small ribosomal subunit protein uS19 (rps19), found in Sulfurisphaera tokodaii (strain DSM 16993 / JCM 10545 / NBRC 100140 / 7) (Sulfolobus tokodaii).